Reading from the N-terminus, the 95-residue chain is Aspartyl/glutamyl-tRNA(Asn/Gln) amidotransferase subunit C (95 aa).

This sequence belongs to the GatC family. As to quaternary structure, heterotrimer of A, B and C subunits.

The enzyme catalyses L-glutamyl-tRNA(Gln) + L-glutamine + ATP + H2O = L-glutaminyl-tRNA(Gln) + L-glutamate + ADP + phosphate + H(+). The catalysed reaction is L-aspartyl-tRNA(Asn) + L-glutamine + ATP + H2O = L-asparaginyl-tRNA(Asn) + L-glutamate + ADP + phosphate + 2 H(+). Allows the formation of correctly charged Asn-tRNA(Asn) or Gln-tRNA(Gln) through the transamidation of misacylated Asp-tRNA(Asn) or Glu-tRNA(Gln) in organisms which lack either or both of asparaginyl-tRNA or glutaminyl-tRNA synthetases. The reaction takes place in the presence of glutamine and ATP through an activated phospho-Asp-tRNA(Asn) or phospho-Glu-tRNA(Gln). The sequence is that of Aspartyl/glutamyl-tRNA(Asn/Gln) amidotransferase subunit C from Prochlorococcus marinus (strain NATL2A).